We begin with the raw amino-acid sequence, 88 residues long: Small ribosomal subunit protein bS20 (88 aa).

The tract at residues 1–26 (MANTAQARKRARQNTKRRQNSASQRS) is disordered. Basic residues predominate over residues 7-19 (ARKRARQNTKRRQ).

Belongs to the bacterial ribosomal protein bS20 family.

Binds directly to 16S ribosomal RNA. The sequence is that of Small ribosomal subunit protein bS20 from Psychrobacter cryohalolentis (strain ATCC BAA-1226 / DSM 17306 / VKM B-2378 / K5).